The chain runs to 121 residues: Large ribosomal subunit protein uL18 (121 aa).

The protein belongs to the universal ribosomal protein uL18 family. As to quaternary structure, part of the 50S ribosomal subunit; part of the 5S rRNA/L5/L18/L25 subcomplex. Contacts the 5S and 23S rRNAs.

This is one of the proteins that bind and probably mediate the attachment of the 5S RNA into the large ribosomal subunit, where it forms part of the central protuberance. This is Large ribosomal subunit protein uL18 from Spiroplasma kunkelii.